The primary structure comprises 365 residues: Methylthioribose-1-phosphate isomerase (365 aa).

Residue Asp-249 is the Proton donor of the active site.

Belongs to the eIF-2B alpha/beta/delta subunits family. MtnA subfamily.

The protein resides in the cytoplasm. It localises to the nucleus. It carries out the reaction 5-(methylsulfanyl)-alpha-D-ribose 1-phosphate = 5-(methylsulfanyl)-D-ribulose 1-phosphate. It functions in the pathway amino-acid biosynthesis; L-methionine biosynthesis via salvage pathway; L-methionine from S-methyl-5-thio-alpha-D-ribose 1-phosphate: step 1/6. Functionally, catalyzes the interconversion of methylthioribose-1-phosphate (MTR-1-P) into methylthioribulose-1-phosphate (MTRu-1-P). This is Methylthioribose-1-phosphate isomerase from Ostreococcus lucimarinus (strain CCE9901).